Reading from the N-terminus, the 271-residue chain is Diaminopimelate epimerase (271 aa).

Substrate contacts are provided by asparagine 13, glutamine 46, and asparagine 66. The Proton donor role is filled by cysteine 75. Substrate-binding positions include 76–77 (GN), asparagine 155, asparagine 188, and 206–207 (ER). Catalysis depends on cysteine 215, which acts as the Proton acceptor. A substrate-binding site is contributed by 216–217 (GS).

This sequence belongs to the diaminopimelate epimerase family. In terms of assembly, homodimer.

Its subcellular location is the cytoplasm. The enzyme catalyses (2S,6S)-2,6-diaminopimelate = meso-2,6-diaminopimelate. It participates in amino-acid biosynthesis; L-lysine biosynthesis via DAP pathway; DL-2,6-diaminopimelate from LL-2,6-diaminopimelate: step 1/1. In terms of biological role, catalyzes the stereoinversion of LL-2,6-diaminopimelate (L,L-DAP) to meso-diaminopimelate (meso-DAP), a precursor of L-lysine and an essential component of the bacterial peptidoglycan. The protein is Diaminopimelate epimerase of Vesicomyosocius okutanii subsp. Calyptogena okutanii (strain HA).